A 207-amino-acid chain; its full sequence is Ras-related protein rab7 (207 aa).

GTP contacts are provided by residues 15-22 (GDSGVGKT), 34-40 (SNQYKAT), 63-67 (DTAGQ), 125-128 (NKID), and 156-157 (AK). The short motif at 37–45 (YKATIGADF) is the Effector region element. 2 S-geranylgeranyl cysteine lipidation sites follow: C205 and C207. The residue at position 207 (C207) is a Cysteine methyl ester.

This sequence belongs to the small GTPase superfamily. Rab family. As to quaternary structure, (Microbial infection) Interacts with Singapore grouper iridoviral proteins VP69 (ORF69) and VP101 (ORF101). Ubiquitously expressed. Expressed in liver, spleen, kidney, brain, intestine, heart, skin, muscle, gill and stomach.

Its subcellular location is the late endosome membrane. The protein localises to the lysosome membrane. Functionally, key regulator in endo-lysosomal trafficking. Governs early-to-late endosomal maturation, microtubule minus-end as well as plus-end directed endosomal migration and positioning, and endosome-lysosome transport through different protein-protein interaction cascades. Plays important roles in microbial pathogen infection and survival, as well as in participating in the life cycle of viruses. The sequence is that of Ras-related protein rab7 from Epinephelus coioides (Orange-spotted grouper).